The sequence spans 382 residues: Probable cytosolic iron-sulfur protein assembly protein 1 (382 aa).

WD repeat units follow at residues 9–48, 55–107, 138–178, 185–224, 231–278, 303–342, and 349–382; these read AHHD…KFPR, THTR…DNDE, GHEH…EEFE, EHQQ…DDWG, GHQG…SETN, AHTY…WEIE, and HGVH…NVWE.

It belongs to the WD repeat CIA1 family. In terms of assembly, interacts with NAR1.

The protein resides in the cytoplasm. It localises to the nucleus. Its function is as follows. Essential component of the cytosolic iron-sulfur (Fe/S) protein assembly machinery. Required for the maturation of extramitochondrial Fe/S proteins. The protein is Probable cytosolic iron-sulfur protein assembly protein 1 of Meyerozyma guilliermondii (strain ATCC 6260 / CBS 566 / DSM 6381 / JCM 1539 / NBRC 10279 / NRRL Y-324) (Yeast).